The chain runs to 113 residues: Hydrogenase maturation factor HypA (113 aa).

H2 is a Ni(2+) binding site. The Zn(2+) site is built by C73, C76, C89, and C92.

Belongs to the HypA/HybF family.

In terms of biological role, involved in the maturation of [NiFe] hydrogenases. Required for nickel insertion into the metal center of the hydrogenase. This chain is Hydrogenase maturation factor HypA, found in Aeromonas hydrophila subsp. hydrophila (strain ATCC 7966 / DSM 30187 / BCRC 13018 / CCUG 14551 / JCM 1027 / KCTC 2358 / NCIMB 9240 / NCTC 8049).